The following is a 946-amino-acid chain: Inhibin beta chain (946 aa).

Disordered stretches follow at residues 115 to 142 (VADR…SSTS) and 174 to 194 (KSRN…RRRR). Low complexity predominate over residues 128-142 (VSVPTTPNETPSSTS). Residues Asn208, Asn217, Asn271, and Asn389 are each glycosylated (N-linked (GlcNAc...) asparagine). The segment at 436–462 (SPGSHLFNGRGGRTDQRSERDPSHHKY) is disordered. Positions 447–459 (GRTDQRSERDPSH) are enriched in basic and acidic residues. Residues Asn471, Asn484, Asn542, Asn561, Asn566, Asn732, and Asn804 are each glycosylated (N-linked (GlcNAc...) asparagine). Cystine bridges form between Cys837–Cys846, Cys845–Cys912, Cys874–Cys943, and Cys878–Cys945.

The protein belongs to the TGF-beta family. In terms of assembly, homodimer or heterodimer; disulfide-linked. Post-translationally, cleaved in vitro by metalloproteases tok and tld to produce a 30 kDa product. Widely expressed in larval brains.

Its subcellular location is the secreted. Functionally, controls several aspects of neuronal morphogenesis; essential for optic lobe development, EcR-B1 expression in larval brains, mushroom body remodeling, dorsal neuron morphogenesis and motoneuron axon guidance. Ligands Actbeta and daw act redundantly through the Activin receptor Babo and its transcriptional mediator Smad2 (Smox), to regulate neuroblast numbers and proliferation rates in the developing larval brain. The chain is Inhibin beta chain (Actbeta) from Drosophila melanogaster (Fruit fly).